The primary structure comprises 467 residues: Peroxisome proliferator-activated receptor alpha (467 aa).

Residues 99–173 (NIECRICGDK…VGMSHNAIRF (75 aa)) constitute a DNA-binding region (nuclear receptor). 2 consecutive NR C4-type zinc fingers follow at residues 102-122 (CRIC…CEGC) and 139-161 (CDRS…FHKC). One can recognise an NR LBD domain in the interval 239 to 466 (FVIHDMETLC…PLLQEIYRDM (228 aa)). The interval 304–433 (DQVTLLKYGV…PKLLQKLADL (130 aa)) is required for heterodimerization with RXRA.

This sequence belongs to the nuclear hormone receptor family. NR1 subfamily. In terms of assembly, heterodimer; with RXRA. This heterodimerization is required for DNA binding and transactivation activity. Interacts with NCOA3 coactivator. Interacts with CITED2; the interaction stimulates its transcriptional activity. Also interacts with PPARBP in vitro. Interacts with AKAP13, LPIN1, PRDM16 and coactivator NCOA6. Interacts with ASXL1 and ASXL2. Interacts with PER2. Interacts with SIRT1; the interaction seems to be modulated by NAD(+) levels. Interacts with CRY1 and CRY2. In hepatocytes, interacts with PAQR3 and HUWE1; the interactions promote PPARA poylubiquitination and HUWE1-mediated degradation. In terms of processing, ubiquitinated by E3 ubiquitin-protein ligase HUWE1; leading to proteasomal degradation. Post-translationally, phosphorylated.

The protein resides in the nucleus. Its function is as follows. Ligand-activated transcription factor. Key regulator of lipid metabolism. Activated by the endogenous ligand 1-palmitoyl-2-oleoyl-sn-glycerol-3-phosphocholine (16:0/18:1-GPC). Activated by oleylethanolamide, a naturally occurring lipid that regulates satiety. Receptor for peroxisome proliferators such as hypolipidemic drugs and fatty acids. Regulates the peroxisomal beta-oxidation pathway of fatty acids. Functions as a transcription activator for the ACOX1 and P450 genes. Transactivation activity requires heterodimerization with RXRA and is antagonized by NR2C2. May be required for the propagation of clock information to metabolic pathways regulated by PER2. In Cavia porcellus (Guinea pig), this protein is Peroxisome proliferator-activated receptor alpha (PPARA).